A 328-amino-acid chain; its full sequence is P2Y purinoceptor 3 (328 aa).

Topologically, residues 1–22 are extracellular; sequence MSMANFTGGRNSCTFHEEFKQV. Residue N5 is glycosylated (N-linked (GlcNAc...) asparagine). The chain crosses the membrane as a helical span at residues 23–43; sequence LLPLVYSVVFLLGLPLNAVVI. Residues 44–57 lie on the Cytoplasmic side of the membrane; the sequence is GQIWLARKALTRTT. Residues 58–78 form a helical membrane-spanning segment; the sequence is IYMLNLAMADLLYVCSLPLLI. Residues 79-96 are Extracellular-facing; the sequence is YNYTQKDYWPFGDFTCKF. A disulfide bond links C94 and C172. Residues 97 to 117 form a helical membrane-spanning segment; that stretch reads VRFQFYTNLHGSILFLTCISV. At 118 to 139 the chain is on the cytoplasmic side; sequence QRYMGICHPLASWHKKKGKKLT. The helical transmembrane segment at 140-160 threads the bilayer; it reads WLVCAAVWFIVIAQCLPTFVF. The Extracellular segment spans residues 161-189; it reads ASTGTQRNRTVCYDLSPPDRSTSYFPYGI. A helical transmembrane segment spans residues 190–210; the sequence is TLTITGFLLPFAAILACYCSM. Residues 211–231 lie on the Cytoplasmic side of the membrane; the sequence is ARILCQKDELIGLAVHKKKDK. Residues 232-252 traverse the membrane as a helical segment; sequence AVRMIIIVVIVFSISFFPFHL. The Extracellular portion of the chain corresponds to 253–275; sequence TKTIYLIVRSSASLPCPTLQAFA. A helical transmembrane segment spans residues 276-298; that stretch reads IAYKCTRPFASMNSVLDPILFYF. The Cytoplasmic segment spans residues 299 to 323; it reads TQRKFRESTRYLLDKMSSKWRQDHC.

It belongs to the G-protein coupled receptor 1 family.

The protein localises to the cell membrane. Receptor for extracellular ADP &gt; UTP &gt; ATP = UDP. The activity of this receptor is mediated by G proteins which activate a phosphatidylinositol-calcium second messenger system. The polypeptide is P2Y purinoceptor 3 (P2RY3) (Gallus gallus (Chicken)).